Here is a 556-residue protein sequence, read N- to C-terminus: MNSPLPDITATDEWSALKDNAKSIESTTLRDLFANDQDRAKNLSFSVADLHVDLSKNLINDDTLTALIALAKKADLEDHREAMFSGRHINSTEDRAVLHTALRLPAEESLHVDEQNVAADVHDVLARMRDFAHALRSGEWLGVTGHTIKTVVNIGIGGSDLGPAMTTQALRSFATAGISGRFVSNVDPADFTSKVADLDPAETLFVVASKTFTTQETLANAHAARRWFLDSLHLEDGTDEANDAIAKHFVAVSTNAEKVSEFGIDTNNMFGFWDWVGGRYSVDSAIGLSLMAVVGPQNFMSFLEGFHAVDEHFRNTPLEKNVPVLMGLLGVWYDDFLGAQSHAVLPYSQDLARFPAYLQQLTMESNGKSVRIDGTPVTAPTGEIYWGEPGTNGQHAFFQLLHQGTQLVPADFIGFATPNDDLPTADGTGSMHDLLMSNFFAQTKVLAFGKTADEITAEGVDPSIVPHKVMPGNRPTTTILAPALTPSVLGQLIALYEHIVFTEGTIWSINSFDQWGVELGKKQAGELLPAVTGEKGVDTGDASTDSLISWYRENRK.

E364 (proton donor) is an active-site residue. Active-site residues include H395 and K521.

Belongs to the GPI family.

The protein resides in the cytoplasm. It carries out the reaction alpha-D-glucose 6-phosphate = beta-D-fructose 6-phosphate. Its pathway is carbohydrate biosynthesis; gluconeogenesis. It functions in the pathway carbohydrate degradation; glycolysis; D-glyceraldehyde 3-phosphate and glycerone phosphate from D-glucose: step 2/4. In terms of biological role, catalyzes the reversible isomerization of glucose-6-phosphate to fructose-6-phosphate. In Corynebacterium kroppenstedtii (strain DSM 44385 / JCM 11950 / CIP 105744 / CCUG 35717), this protein is Glucose-6-phosphate isomerase.